Here is a 234-residue protein sequence, read N- to C-terminus: Large ribosomal subunit protein uL1 (234 aa).

Belongs to the universal ribosomal protein uL1 family. As to quaternary structure, part of the 50S ribosomal subunit.

Its function is as follows. Binds directly to 23S rRNA. The L1 stalk is quite mobile in the ribosome, and is involved in E site tRNA release. Protein L1 is also a translational repressor protein, it controls the translation of the L11 operon by binding to its mRNA. In Edwardsiella ictaluri (strain 93-146), this protein is Large ribosomal subunit protein uL1.